Reading from the N-terminus, the 352-residue chain is uncharacterized protein (352 aa).

Residues 1–55 (MAMAALTSSSSAITLLNKPFLPNRSSFFSSDSQSPLLRFSASTSVRSRFPSAAIS) constitute a chloroplast transit peptide.

This sequence belongs to the methyltransferase superfamily.

It localises to the plastid. The protein resides in the chloroplast. Its subcellular location is the plastoglobule. This is an uncharacterized protein from Arabidopsis thaliana (Mouse-ear cress).